We begin with the raw amino-acid sequence, 238 residues long: Probable transcriptional regulatory protein SAB0618 (238 aa).

Belongs to the TACO1 family. YeeN subfamily.

It is found in the cytoplasm. This chain is Probable transcriptional regulatory protein SAB0618, found in Staphylococcus aureus (strain bovine RF122 / ET3-1).